Reading from the N-terminus, the 323-residue chain is Beta-ketoacyl-[acyl-carrier-protein] synthase III (323 aa).

Residues cysteine 113 and histidine 250 contribute to the active site. Residues 251-255 are ACP-binding; that stretch reads QANRR. The active site involves asparagine 280.

It belongs to the thiolase-like superfamily. FabH family. In terms of assembly, homodimer.

The protein resides in the cytoplasm. It carries out the reaction malonyl-[ACP] + acetyl-CoA + H(+) = 3-oxobutanoyl-[ACP] + CO2 + CoA. It functions in the pathway lipid metabolism; fatty acid biosynthesis. In terms of biological role, catalyzes the condensation reaction of fatty acid synthesis by the addition to an acyl acceptor of two carbons from malonyl-ACP. Catalyzes the first condensation reaction which initiates fatty acid synthesis and may therefore play a role in governing the total rate of fatty acid production. Possesses both acetoacetyl-ACP synthase and acetyl transacylase activities. Its substrate specificity determines the biosynthesis of branched-chain and/or straight-chain of fatty acids. The protein is Beta-ketoacyl-[acyl-carrier-protein] synthase III of Rhizobium johnstonii (strain DSM 114642 / LMG 32736 / 3841) (Rhizobium leguminosarum bv. viciae).